The chain runs to 712 residues: Polyribonucleotide nucleotidyltransferase (712 aa).

Asp-487 and Asp-493 together coordinate Mg(2+). The KH domain maps to 554–613 (PRIEVMNIPVDKIREVIGSGGKVIREIVEKTGAKINIEDDGTVKIASSSGKEIEAARKWI). Residues 623–691 (GQIYEGTVVK…ERGKVRLSMK (69 aa)) form the S1 motif domain.

Belongs to the polyribonucleotide nucleotidyltransferase family. Mg(2+) is required as a cofactor.

It localises to the cytoplasm. It carries out the reaction RNA(n+1) + phosphate = RNA(n) + a ribonucleoside 5'-diphosphate. In terms of biological role, involved in mRNA degradation. Catalyzes the phosphorolysis of single-stranded polyribonucleotides processively in the 3'- to 5'-direction. This Rhizobium leguminosarum bv. trifolii (strain WSM2304) protein is Polyribonucleotide nucleotidyltransferase.